A 185-amino-acid polypeptide reads, in one-letter code: uncharacterized protein (185 aa).

Met-1 is modified (N-acetylmethionine). Basic and acidic residues-rich tracts occupy residues Met-1–Gln-18, Thr-26–Glu-47, and Ser-59–Glu-71. Disordered stretches follow at residues Met-1–Glu-71 and Asp-155–Leu-185. The segment covering Leu-170–Leu-185 has biased composition (acidic residues).

This is an uncharacterized protein from Saccharomyces cerevisiae (strain ATCC 204508 / S288c) (Baker's yeast).